The sequence spans 277 residues: Bleomycin hydrolase (277 aa).

The active site involves C53.

It belongs to the peptidase C1 family. As to quaternary structure, homohexamer. Interacts with NUDT12 (via ANK repeats).

It is found in the cytoplasm. It localises to the cytoplasmic granule. The enzyme catalyses Inactivates bleomycin B2 (a cytotoxic glycometallopeptide) by hydrolysis of a carboxyamide bond of beta-aminoalanine, but also shows general aminopeptidase activity. The specificity varies somewhat with source, but amino acid arylamides of Met, Leu and Ala are preferred.. With respect to regulation, strongly inhibited by leupeptin, puromycin, NEM, and divalent cations. Its function is as follows. The normal physiological role of BLM hydrolase is unknown, but it catalyzes the inactivation of the antitumor drug BLM (a glycopeptide) by hydrolyzing the carboxamide bond of its B-aminoalaninamide moiety thus protecting normal and malignant cells from BLM toxicity. The sequence is that of Bleomycin hydrolase (BLMH) from Oryctolagus cuniculus (Rabbit).